The sequence spans 889 residues: Alanine--tRNA ligase (889 aa).

Residues histidine 564, histidine 568, cysteine 671, and histidine 675 each contribute to the Zn(2+) site.

This sequence belongs to the class-II aminoacyl-tRNA synthetase family. Zn(2+) serves as cofactor.

Its subcellular location is the cytoplasm. The catalysed reaction is tRNA(Ala) + L-alanine + ATP = L-alanyl-tRNA(Ala) + AMP + diphosphate. Catalyzes the attachment of alanine to tRNA(Ala) in a two-step reaction: alanine is first activated by ATP to form Ala-AMP and then transferred to the acceptor end of tRNA(Ala). Also edits incorrectly charged Ser-tRNA(Ala) and Gly-tRNA(Ala) via its editing domain. In Pelagibacter ubique (strain HTCC1062), this protein is Alanine--tRNA ligase.